The chain runs to 315 residues: Endolytic peptidoglycan transglycosylase RlpA (315 aa).

The N-terminal stretch at 1-19 (MGLALEKVCFLGVIFLISA) is a signal peptide. Residue cysteine 20 is the site of N-palmitoyl cysteine attachment. Cysteine 20 is lipidated: S-diacylglycerol cysteine. Over residues 68–79 (SDSQDSNTKDQP) the composition is skewed to basic and acidic residues. The tract at residues 68–92 (SDSQDSNTKDQPLDNGMRDSSSIQR) is disordered. Residues 242 to 315 (SVSGGKFSLQ…YNQNAVLTRE (74 aa)) enclose the SPOR domain.

Belongs to the RlpA family.

Its subcellular location is the cell membrane. Its function is as follows. Lytic transglycosylase with a strong preference for naked glycan strands that lack stem peptides. The chain is Endolytic peptidoglycan transglycosylase RlpA from Helicobacter pylori (strain ATCC 700392 / 26695) (Campylobacter pylori).